A 167-amino-acid polypeptide reads, in one-letter code: S-ribosylhomocysteine lyase (167 aa).

The Fe cation site is built by His54, His58, and Cys128.

The protein belongs to the LuxS family. Homodimer. Fe cation is required as a cofactor.

The catalysed reaction is S-(5-deoxy-D-ribos-5-yl)-L-homocysteine = (S)-4,5-dihydroxypentane-2,3-dione + L-homocysteine. In terms of biological role, involved in the synthesis of autoinducer 2 (AI-2) which is secreted by bacteria and is used to communicate both the cell density and the metabolic potential of the environment. The regulation of gene expression in response to changes in cell density is called quorum sensing. Catalyzes the transformation of S-ribosylhomocysteine (RHC) to homocysteine (HC) and 4,5-dihydroxy-2,3-pentadione (DPD). This chain is S-ribosylhomocysteine lyase, found in Sulfurimonas denitrificans (strain ATCC 33889 / DSM 1251) (Thiomicrospira denitrificans (strain ATCC 33889 / DSM 1251)).